A 129-amino-acid polypeptide reads, in one-letter code: Small ribosomal subunit protein uS9 (129 aa).

The protein belongs to the universal ribosomal protein uS9 family.

This chain is Small ribosomal subunit protein uS9, found in Helicobacter pylori (strain HPAG1).